The primary structure comprises 167 residues: Small heat shock protein C1 (167 aa).

The sHSP domain occupies 59–167; sequence PFYESNSIKS…EQDAKEIPIN (109 aa).

It belongs to the small heat shock protein (HSP20) family.

This chain is Small heat shock protein C1 (hspC1), found in Rickettsia bellii (strain RML369-C).